Consider the following 423-residue polypeptide: Ferrochelatase, mitochondrial (423 aa).

A mitochondrion-targeting transit peptide spans 1-54 (MRSLGANMAAALRAAGVLLRDPLVSSSWRVYQPWRWKSVAAAAAATTETAQHAQ). Lys-57 carries the N6-acetyllysine modification. Protoporphyrin IX is bound by residues Arg-115, Tyr-123, and Ser-130. An N6-succinyllysine modification is found at Lys-138. Cys-196 provides a ligand contact to [2Fe-2S] cluster. Catalysis depends on residues His-230 and Asp-383. Cys-403, Cys-406, and Cys-411 together coordinate [2Fe-2S] cluster. An N6-acetyllysine; alternate modification is found at Lys-415. An N6-succinyllysine; alternate modification is found at Lys-415.

It belongs to the ferrochelatase family. Homodimer. Homotetramer. Interaction with PGRMC1; the interaction results in decreased FECH activity. Interacts with ABCB10 and SLC25A37; this interaction forms an oligomeric complex. Forms a complex with ABCB7 and ABCB10, where a dimeric FECH bridges ABCB7 and ABCB10 homodimers; this complex may be required for cellular iron homeostasis, mitochondrial function and heme biosynthesis. Interacts with ABCB7 and ABCB10. The cofactor is [2Fe-2S] cluster.

The protein localises to the mitochondrion inner membrane. The catalysed reaction is heme b + 2 H(+) = protoporphyrin IX + Fe(2+). Its pathway is porphyrin-containing compound metabolism; protoheme biosynthesis; protoheme from protoporphyrin-IX: step 1/1. In terms of biological role, catalyzes the ferrous insertion into protoporphyrin IX and participates in the terminal step in the heme biosynthetic pathway. The chain is Ferrochelatase, mitochondrial from Pan troglodytes (Chimpanzee).